The primary structure comprises 131 residues: Peptide methionine sulfoxide reductase MsrB (131 aa).

Residues 8 to 130 (DAEWRAQLTD…NSVCLDLKRS (123 aa)) enclose the MsrB domain. Zn(2+)-binding residues include cysteine 47, cysteine 50, cysteine 96, and cysteine 99. The active-site Nucleophile is the cysteine 119.

This sequence belongs to the MsrB Met sulfoxide reductase family. Zn(2+) is required as a cofactor.

It catalyses the reaction L-methionyl-[protein] + [thioredoxin]-disulfide + H2O = L-methionyl-(R)-S-oxide-[protein] + [thioredoxin]-dithiol. This chain is Peptide methionine sulfoxide reductase MsrB, found in Alkalilimnicola ehrlichii (strain ATCC BAA-1101 / DSM 17681 / MLHE-1).